A 165-amino-acid polypeptide reads, in one-letter code: Lipoprotein signal peptidase (165 aa).

The next 3 membrane-spanning stretches (helical) occupy residues 12-32, 70-90, and 102-122; these read WLWL…LILQ, WFFA…MYRA, and ALII…GFVV. Catalysis depends on residues Asp123 and Asp141. The chain crosses the membrane as a helical span at residues 137–157; sequence FNLADTAICIGAALVVLEGFL.

The protein belongs to the peptidase A8 family.

It localises to the cell inner membrane. The enzyme catalyses Release of signal peptides from bacterial membrane prolipoproteins. Hydrolyzes -Xaa-Yaa-Zaa-|-(S,diacylglyceryl)Cys-, in which Xaa is hydrophobic (preferably Leu), and Yaa (Ala or Ser) and Zaa (Gly or Ala) have small, neutral side chains.. It participates in protein modification; lipoprotein biosynthesis (signal peptide cleavage). This protein specifically catalyzes the removal of signal peptides from prolipoproteins. The polypeptide is Lipoprotein signal peptidase (Cronobacter sakazakii (strain ATCC BAA-894) (Enterobacter sakazakii)).